The chain runs to 305 residues: Oxygen-dependent coproporphyrinogen-III oxidase (305 aa).

Serine 98 contributes to the substrate binding site. A divalent metal cation-binding residues include histidine 102 and histidine 112. Histidine 112 functions as the Proton donor in the catalytic mechanism. Substrate is bound at residue 114–116 (NVR). Residues histidine 151 and histidine 181 each contribute to the a divalent metal cation site. An important for dimerization region spans residues 246-281 (YVEFNLVYDRGTLFGLQSGGRTESILMSMPPLARWE). 264–266 (GGR) contributes to the substrate binding site.

It belongs to the aerobic coproporphyrinogen-III oxidase family. As to quaternary structure, homodimer. The cofactor is a divalent metal cation.

It is found in the cytoplasm. It catalyses the reaction coproporphyrinogen III + O2 + 2 H(+) = protoporphyrinogen IX + 2 CO2 + 2 H2O. The protein operates within porphyrin-containing compound metabolism; protoporphyrin-IX biosynthesis; protoporphyrinogen-IX from coproporphyrinogen-III (O2 route): step 1/1. Functionally, involved in the heme biosynthesis. Catalyzes the aerobic oxidative decarboxylation of propionate groups of rings A and B of coproporphyrinogen-III to yield the vinyl groups in protoporphyrinogen-IX. The polypeptide is Oxygen-dependent coproporphyrinogen-III oxidase (Vibrio campbellii (strain ATCC BAA-1116)).